We begin with the raw amino-acid sequence, 170 residues long: ATP synthase subunit b (170 aa).

Residues 4-24 traverse the membrane as a helical segment; it reads ILLLGLALAPVALFASQGAVE.

This sequence belongs to the ATPase B chain family. In terms of assembly, F-type ATPases have 2 components, F(1) - the catalytic core - and F(0) - the membrane proton channel. F(1) has five subunits: alpha(3), beta(3), gamma(1), delta(1), epsilon(1). F(0) has three main subunits: a(1), b(2) and c(10-14). The alpha and beta chains form an alternating ring which encloses part of the gamma chain. F(1) is attached to F(0) by a central stalk formed by the gamma and epsilon chains, while a peripheral stalk is formed by the delta and b chains.

Its subcellular location is the cell inner membrane. Its function is as follows. F(1)F(0) ATP synthase produces ATP from ADP in the presence of a proton or sodium gradient. F-type ATPases consist of two structural domains, F(1) containing the extramembraneous catalytic core and F(0) containing the membrane proton channel, linked together by a central stalk and a peripheral stalk. During catalysis, ATP synthesis in the catalytic domain of F(1) is coupled via a rotary mechanism of the central stalk subunits to proton translocation. Functionally, component of the F(0) channel, it forms part of the peripheral stalk, linking F(1) to F(0). This Aliarcobacter butzleri (strain RM4018) (Arcobacter butzleri) protein is ATP synthase subunit b.